A 101-amino-acid polypeptide reads, in one-letter code: Cell division protein FtsB (101 aa).

Over 1-3 (MRI) the chain is Cytoplasmic. Residues 4-21 (VIYSMLVLLIAIQYPLWL) form a helical membrane-spanning segment. Residues 22–101 (GKGGWLKVYE…KSSDTQVTKQ (80 aa)) lie on the Periplasmic side of the membrane. The stretch at 33 to 53 (ERQVELQEAKNSLLALRNAKL) forms a coiled coil.

The protein belongs to the FtsB family. In terms of assembly, part of a complex composed of FtsB, FtsL and FtsQ.

The protein resides in the cell inner membrane. In terms of biological role, essential cell division protein. May link together the upstream cell division proteins, which are predominantly cytoplasmic, with the downstream cell division proteins, which are predominantly periplasmic. The polypeptide is Cell division protein FtsB (Polynucleobacter necessarius subsp. necessarius (strain STIR1)).